Reading from the N-terminus, the 324-residue chain is Beta-ketoacyl-[acyl-carrier-protein] synthase III (324 aa).

Active-site residues include cysteine 113 and histidine 251. The ACP-binding stretch occupies residues 252 to 256 (QANKR). Residue asparagine 281 is part of the active site.

Belongs to the thiolase-like superfamily. FabH family. As to quaternary structure, homodimer.

The protein localises to the cytoplasm. It catalyses the reaction malonyl-[ACP] + acetyl-CoA + H(+) = 3-oxobutanoyl-[ACP] + CO2 + CoA. The protein operates within lipid metabolism; fatty acid biosynthesis. In terms of biological role, catalyzes the condensation reaction of fatty acid synthesis by the addition to an acyl acceptor of two carbons from malonyl-ACP. Catalyzes the first condensation reaction which initiates fatty acid synthesis and may therefore play a role in governing the total rate of fatty acid production. Possesses both acetoacetyl-ACP synthase and acetyl transacylase activities. Its substrate specificity determines the biosynthesis of branched-chain and/or straight-chain of fatty acids. In Bartonella tribocorum (strain CIP 105476 / IBS 506), this protein is Beta-ketoacyl-[acyl-carrier-protein] synthase III.